The primary structure comprises 363 residues: tRNA-specific 2-thiouridylase MnmA (363 aa).

Residues 6-13 (AMSGGVDS) and Leu32 each bind ATP. Cys101 (nucleophile) is an active-site residue. Cys101 and Cys193 are disulfide-bonded. Gly125 contributes to the ATP binding site. Positions 143 to 145 (KDQ) are interaction with tRNA. Cys193 (cysteine persulfide intermediate) is an active-site residue.

The protein belongs to the MnmA/TRMU family.

The protein resides in the cytoplasm. The catalysed reaction is S-sulfanyl-L-cysteinyl-[protein] + uridine(34) in tRNA + AH2 + ATP = 2-thiouridine(34) in tRNA + L-cysteinyl-[protein] + A + AMP + diphosphate + H(+). Its function is as follows. Catalyzes the 2-thiolation of uridine at the wobble position (U34) of tRNA, leading to the formation of s(2)U34. This Mycobacterium marinum (strain ATCC BAA-535 / M) protein is tRNA-specific 2-thiouridylase MnmA.